Consider the following 156-residue polypeptide: Small ribosomal subunit protein uS7 (156 aa).

This sequence belongs to the universal ribosomal protein uS7 family. In terms of assembly, part of the 30S ribosomal subunit. Contacts proteins S9 and S11.

Functionally, one of the primary rRNA binding proteins, it binds directly to 16S rRNA where it nucleates assembly of the head domain of the 30S subunit. Is located at the subunit interface close to the decoding center, probably blocks exit of the E-site tRNA. The sequence is that of Small ribosomal subunit protein uS7 from Renibacterium salmoninarum (strain ATCC 33209 / DSM 20767 / JCM 11484 / NBRC 15589 / NCIMB 2235).